We begin with the raw amino-acid sequence, 315 residues long: Calumenin-B (315 aa).

An N-terminal signal peptide occupies residues 1 to 19 (MEQWPLLFVVALCILQSSS). Residues 22–39 (MEKKDRVHHDAPLSNKDH) show a composition bias toward basic and acidic residues. The interval 22-42 (MEKKDRVHHDAPLSNKDHDDE) is disordered. EF-hand domains are found at residues 68 to 103 (ESKERLGKIVEKIDEDHDGFVTADEMKRWIKHAQRR), 104 to 139 (WIYEDVDRQWQAHDLNSDSFVSWEEYKDATYGYILD), 151 to 186 (QMMTRDERRFKMADQDGDLRANKEEFTAFLHPEEFD), 188 to 223 (MKDIVVLETMEDIDKNGDGLIDLNEYIGDMYSQNGD), 229 to 264 (WVKTEREQFTEFRDKNKDGRMDKDETRDWILPADYD), and 265 to 300 (HAEAEAKHLLYESDADKDGRLTKQEIVDKYDLFVGS). Residues D81, D83, D85, E92, D117, N119, D121, E128, D164, D166, D168, R170, E175, D201, N203, D205, E212, D242, N244, D246, R248, E253, D278, D280, D282, R284, and E289 each contribute to the Ca(2+) site. Positions 312–315 (HDEF) match the Prevents secretion from ER motif.

It belongs to the CREC family. In terms of assembly, interacts with ggcx.

Its subcellular location is the endoplasmic reticulum membrane. The protein resides in the golgi apparatus. It localises to the secreted. It is found in the melanosome. The protein localises to the sarcoplasmic reticulum lumen. Involved in regulation of vitamin K-dependent carboxylation of multiple N-terminal glutamate residues. Seems to inhibit gamma-carboxylase ggcx. Binds 7 calcium ions with a low affinity. This is Calumenin-B (calub) from Danio rerio (Zebrafish).